A 427-amino-acid polypeptide reads, in one-letter code: Serine/arginine (SR)-type shuttling mRNA binding protein GBP2 (427 aa).

Residues methionine 1–leucine 101 are disordered. Basic and acidic residues predominate over residues arginine 22–aspartate 32. The residue at position 24 (serine 24) is a Phosphoserine. Residues aspartate 35 to serine 44 are compositionally biased toward low complexity. Positions aspartate 50–aspartate 60 are enriched in basic and acidic residues. 2 consecutive RRM domains span residues asparagine 122 to proline 198 and phenylalanine 219 to phenylalanine 296. Position 130 is a phosphothreonine (threonine 130). The segment covering lysine 300–glycine 317 has biased composition (basic and acidic residues). The interval lysine 300–glutamate 319 is disordered. In terms of domain architecture, RRM 3 spans cysteine 349–arginine 426.

Post-translationally, methylated by HMT1.

It localises to the cytoplasm. It is found in the nucleus. Its subcellular location is the chromosome. The protein resides in the telomere. The protein localises to the P-body. It localises to the stress granule. Binds to intron-containing transcripts and is involved in quality control for the export of spliced mRNAs from the nucleus. Binds to pre-mRNAs until splicing is completed or until faulty mRNAs are degraded. On correctly spliced mRNAs, GBP2 and HRB1 recruit MEX67 to allow nuclear export. On faulty mRNAs, GBP2 and HRB1 associate with the TRAMP complex that guides those pre-mRNAs to the exosome for degradation. Binds single-stranded telomeric sequences of the type (TG[1-3])n in vitro. Influences the localization of RAP1 in the nuclei. Involved in modulating telomere length. This chain is Serine/arginine (SR)-type shuttling mRNA binding protein GBP2, found in Saccharomyces cerevisiae (strain ATCC 204508 / S288c) (Baker's yeast).